A 90-amino-acid polypeptide reads, in one-letter code: Cell division topological specificity factor (90 aa).

This sequence belongs to the MinE family.

Its function is as follows. Prevents the cell division inhibition by proteins MinC and MinD at internal division sites while permitting inhibition at polar sites. This ensures cell division at the proper site by restricting the formation of a division septum at the midpoint of the long axis of the cell. This chain is Cell division topological specificity factor, found in Pelotomaculum thermopropionicum (strain DSM 13744 / JCM 10971 / SI).